Reading from the N-terminus, the 320-residue chain is Bifunctional ligase/repressor BirA (320 aa).

Positions 22–41 (GEQLGERLGMSRAAINKHIQ) form a DNA-binding region, H-T-H motif. Residues 66-254 (LLDADRIHSQ…KLRAALELFE (189 aa)) form the BPL/LPL catalytic domain. Biotin-binding positions include 89 to 91 (STN), Gln112, 116 to 118 (RGR), and Lys183.

This sequence belongs to the biotin--protein ligase family.

It carries out the reaction biotin + L-lysyl-[protein] + ATP = N(6)-biotinyl-L-lysyl-[protein] + AMP + diphosphate + H(+). Functionally, acts both as a biotin--[acetyl-CoA-carboxylase] ligase and a biotin-operon repressor. In the presence of ATP, BirA activates biotin to form the BirA-biotinyl-5'-adenylate (BirA-bio-5'-AMP or holoBirA) complex. HoloBirA can either transfer the biotinyl moiety to the biotin carboxyl carrier protein (BCCP) subunit of acetyl-CoA carboxylase, or bind to the biotin operator site and inhibit transcription of the operon. This chain is Bifunctional ligase/repressor BirA, found in Salmonella typhimurium (strain LT2 / SGSC1412 / ATCC 700720).